A 3661-amino-acid polypeptide reads, in one-letter code: Serine/threonine-protein kinase SMG1 (3661 aa).

Positions 1–11 (MSRRAPGSRLS) are enriched in low complexity. 2 disordered regions span residues 1–101 (MSRR…TYGR) and 116–144 (PEFT…MSYS). The segment at 1–1977 (MSRRAPGSRL…GVLLQQHMYV (1977 aa)) is interaction with SMG8 and SMG9. Residues 26–35 (NDWQPRTDSA) show a composition bias toward polar residues. Basic and acidic residues-rich tracts occupy residues 69–86 (QRHD…DEKG) and 129–138 (ATKDMRKSQE). Residue Lys-173 is modified to N6-acetyllysine. Residues 1154–1165 (RNSASPKHSLNG) are compositionally biased toward polar residues. A disordered region spans residues 1154–1175 (RNSASPKHSLNGESRKTVLSKP). Residues 1283–1866 (RELQKSIEVQ…LYPAIVGTIS (584 aa)) enclose the FAT domain. The HEAT repeat unit spans residues 1817–1852 (APWRGIIPQLFSRLNHPEVYVRQSICNLLCRVAQDS). The disordered stretch occupies residues 1898–1919 (ECEGGSPPASQDSNKDEPKSGL). The PI3K/PI4K catalytic domain occupies 2124 to 2463 (VGGTITILPT…MEREITRSLF (340 aa)). The interval 2130 to 2136 (ILPTKTK) is G-loop. Residues 2332 to 2340 (GLGDRHLDN) form a catalytic loop region. Residues 2352-2376 (HIDYNVCFEKGKSLRVPEKVPFRMT) are activation loop. The residue at position 3550 (Thr-3550) is a Phosphothreonine. Phosphoserine occurs at positions 3556 and 3570. The span at 3568–3579 (ATSADTPPSTVP) shows a compositional bias: polar residues. The tract at residues 3568–3591 (ATSADTPPSTVPGTGKSVACSPKK) is disordered. Residues Thr-3573 and Thr-3577 each carry the phosphothreonine modification. The FATC domain occupies 3629-3661 (RRMSVAEQVDYVIKEATNLDNLAQLYEGWTAWV).

This sequence belongs to the PI3/PI4-kinase family. In terms of assembly, component of the SMG1C complex composed of SMG1, SMG8 and SMG9; the recruitment of SMG8 to SMG1 N-terminus induces a large conformational change in the SMG1 C-terminal head domain containing the catalytic domain. Component of the transient SURF (SMG1-UPF1-eRF1-eRF3) complex. Part of a complex composed of SMG1, DHX34 and UPF1; within the complex DHX34 acts as a scaffolding protein to facilitate SMG1 phosphorylation of UPF1. Interacts with PRKCI. Interacts with TELO2 and TTI1. Interacts with RUVBL1 and RUVBL2. Interacts with UPF2. Interacts with DHX34 (via C-terminus); the interaction is RNA-independent. Mn(2+) is required as a cofactor. Autophosphorylated. Widely expressed, with highest level in heart and skeletal muscle. Expressed in placenta, brain, lung and spleen, but not in liver.

It localises to the nucleus. It is found in the cytoplasm. It carries out the reaction L-seryl-[protein] + ATP = O-phospho-L-seryl-[protein] + ADP + H(+). The enzyme catalyses L-threonyl-[protein] + ATP = O-phospho-L-threonyl-[protein] + ADP + H(+). Its activity is regulated as follows. Inhibited by caffeine, LY294002 and wortmannin. In terms of biological role, serine/threonine protein kinase involved in both mRNA surveillance and genotoxic stress response pathways. Recognizes the substrate consensus sequence [ST]-Q. Plays a central role in nonsense-mediated decay (NMD) of mRNAs containing premature stop codons by phosphorylating UPF1/RENT1. Recruited by release factors to stalled ribosomes together with SMG8 and SMG9 (forming the SMG1C protein kinase complex), and UPF1 to form the transient SURF (SMG1-UPF1-eRF1-eRF3) complex. In EJC-dependent NMD, the SURF complex associates with the exon junction complex (EJC) through UPF2 and allows the formation of an UPF1-UPF2-UPF3 surveillance complex which is believed to activate NMD. Also acts as a genotoxic stress-activated protein kinase that displays some functional overlap with ATM. Can phosphorylate p53/TP53 and is required for optimal p53/TP53 activation after cellular exposure to genotoxic stress. Its depletion leads to spontaneous DNA damage and increased sensitivity to ionizing radiation (IR). May activate PRKCI but not PRKCZ. The polypeptide is Serine/threonine-protein kinase SMG1 (Homo sapiens (Human)).